The sequence spans 248 residues: uncharacterized protein (248 aa).

Position 8 to 32 (8 to 32 (IVTGAAQGIGQAYAQALAREGASVV)) interacts with NADP(+). Serine 143 is a substrate binding site. The Proton acceptor role is filled by tyrosine 153.

The protein belongs to the short-chain dehydrogenases/reductases (SDR) family.

This is an uncharacterized protein from Mycobacterium tuberculosis (strain CDC 1551 / Oshkosh).